A 119-amino-acid polypeptide reads, in one-letter code: Large ribosomal subunit protein bL20 (119 aa).

The protein belongs to the bacterial ribosomal protein bL20 family.

In terms of biological role, binds directly to 23S ribosomal RNA and is necessary for the in vitro assembly process of the 50S ribosomal subunit. It is not involved in the protein synthesizing functions of that subunit. In Alcanivorax borkumensis (strain ATCC 700651 / DSM 11573 / NCIMB 13689 / SK2), this protein is Large ribosomal subunit protein bL20.